Reading from the N-terminus, the 595-residue chain is Beta-(1--&gt;2)glucan export ATP-binding/permease protein NdvA (595 aa).

Positions 21 to 301 (SLLICAANVM…MSNFINLTVS (281 aa)) constitute an ABC transmembrane type-1 domain. 5 helical membrane passes run 22–42 (LLIC…PILF), 55–75 (IILT…AYVL), 128–148 (AIWL…FILI), 152–172 (FNMN…YVLI), and 248–268 (TAST…VAKG). Residues 335-569 (VQFHHVTYKF…GGRFYKLLKA (235 aa)) form the ABC transporter domain. 368–375 (GPTGAGKT) contacts ATP.

This sequence belongs to the ABC transporter superfamily. Beta-(1--&gt;2)glucan exporter (TC 3.A.1.108.1) family. As to quaternary structure, homodimer.

It localises to the cell inner membrane. It catalyses the reaction [(1-&gt;2)-beta-D-glucosyl](n)(in) + ATP + H2O = [(1-&gt;2)-beta-D-glucosyl](n)(out) + ADP + phosphate + H(+). Its function is as follows. Involved in beta-(1--&gt;2)glucan export. Transmembrane domains (TMD) form a pore in the inner membrane and the ATP-binding domain (NBD) is responsible for energy generation. The protein is Beta-(1--&gt;2)glucan export ATP-binding/permease protein NdvA of Bartonella quintana (strain Toulouse) (Rochalimaea quintana).